The chain runs to 275 residues: Polyamine aminopropyltransferase (275 aa).

The 234-residue stretch at 2–235 folds into the PABS domain; sequence ELWFTEKQTK…GLWTFTIGSK (234 aa). Gln-31 is an S-methyl-5'-thioadenosine binding site. The spermidine site is built by His-62 and Asp-86. S-methyl-5'-thioadenosine-binding positions include Glu-106 and 137-138; that span reads DG. Residue Asp-155 is the Proton acceptor of the active site. Spermidine is bound at residue 155 to 158; sequence DSTE. Pro-162 is a binding site for S-methyl-5'-thioadenosine.

The protein belongs to the spermidine/spermine synthase family. In terms of assembly, homodimer or homotetramer.

The protein resides in the cytoplasm. The catalysed reaction is S-adenosyl 3-(methylsulfanyl)propylamine + putrescine = S-methyl-5'-thioadenosine + spermidine + H(+). It functions in the pathway amine and polyamine biosynthesis; spermidine biosynthesis; spermidine from putrescine: step 1/1. Catalyzes the irreversible transfer of a propylamine group from the amino donor S-adenosylmethioninamine (decarboxy-AdoMet) to putrescine (1,4-diaminobutane) to yield spermidine. This is Polyamine aminopropyltransferase from Bacillus mycoides (strain KBAB4) (Bacillus weihenstephanensis).